The sequence spans 209 residues: Thymidylate kinase (209 aa).

7–14 (GVEGSGKS) provides a ligand contact to ATP.

The protein belongs to the thymidylate kinase family.

It carries out the reaction dTMP + ATP = dTDP + ADP. In terms of biological role, phosphorylation of dTMP to form dTDP in both de novo and salvage pathways of dTTP synthesis. The protein is Thymidylate kinase of Solidesulfovibrio magneticus (strain ATCC 700980 / DSM 13731 / RS-1) (Desulfovibrio magneticus).